A 396-amino-acid chain; its full sequence is uncharacterized protein (396 aa).

Belongs to the mycobacterial PPE family.

This is an uncharacterized protein from Mycobacterium tuberculosis (strain ATCC 25618 / H37Rv).